The primary structure comprises 545 residues: Chaperonin GroEL (545 aa).

Residues 30 to 33 (TLGP), Lys-51, 87 to 91 (DGTTT), Gly-415, and Asp-495 each bind ATP.

It belongs to the chaperonin (HSP60) family. As to quaternary structure, forms a cylinder of 14 subunits composed of two heptameric rings stacked back-to-back. Interacts with the co-chaperonin GroES.

Its subcellular location is the cytoplasm. The enzyme catalyses ATP + H2O + a folded polypeptide = ADP + phosphate + an unfolded polypeptide.. Functionally, together with its co-chaperonin GroES, plays an essential role in assisting protein folding. The GroEL-GroES system forms a nano-cage that allows encapsulation of the non-native substrate proteins and provides a physical environment optimized to promote and accelerate protein folding. The protein is Chaperonin GroEL of Shewanella sp. (strain ANA-3).